The primary structure comprises 303 residues: MFGKKNLKWLGVVATLMMTFVQLGGALVTKTGSADGCGSSWPLCHGALIPEFFPIDTIIELSHRAVSALSLLMVLWLVITAWKHIGYIKEIKPLSIISVGFLLLQALIGAAAVIWQQNDYVLALHFGISLISFSSVFLITLIIFSIDQKYEAAELYIKKPLRRLTWLMAIIIYCGVYTGALVRHADASLAYGGWPLPFHDLVPHSEQDWVQLTHRIMAFIVFTIIMITYIHAVKNYPNNRTVHYGYTAAFILVILQVITGALSIMTNVNLIIALFHALFITYLFGMTTYFIMLMLRSVRSDKQ.

Residues 1 to 8 (MFGKKNLK) lie on the Cytoplasmic side of the membrane. Residues 9-29 (WLGVVATLMMTFVQLGGALVT) traverse the membrane as a helical segment. The Extracellular portion of the chain corresponds to 30–67 (KTGSADGCGSSWPLCHGALIPEFFPIDTIIELSHRAVS). A disulfide bridge connects residues Cys-37 and Cys-44. Glu-60 is an active-site residue. His-63 provides a ligand contact to heme o. A helical membrane pass occupies residues 68–88 (ALSLLMVLWLVITAWKHIGYI). At 89–93 (KEIKP) the chain is on the cytoplasmic side. A helical transmembrane segment spans residues 94–114 (LSIISVGFLLLQALIGAAAVI). At 115 to 125 (WQQNDYVLALH) the chain is on the extracellular side. Heme o is bound at residue His-125. Residues 126-146 (FGISLISFSSVFLITLIIFSI) traverse the membrane as a helical segment. At 147-163 (DQKYEAAELYIKKPLRR) the chain is on the cytoplasmic side. Residues 164–184 (LTWLMAIIIYCGVYTGALVRH) traverse the membrane as a helical segment. At 185-215 (ADASLAYGGWPLPFHDLVPHSEQDWVQLTHR) the chain is on the extracellular side. His-214 is a binding site for heme b. Residues 216–236 (IMAFIVFTIIMITYIHAVKNY) traverse the membrane as a helical segment. The Cytoplasmic portion of the chain corresponds to 237-244 (PNNRTVHY). Residues 245 to 265 (GYTAAFILVILQVITGALSIM) form a helical membrane-spanning segment. The Extracellular segment spans residues 266–270 (TNVNL). Residues 271–291 (IIALFHALFITYLFGMTTYFI) traverse the membrane as a helical segment. Position 276 (His-276) interacts with heme b. Topologically, residues 292–303 (MLMLRSVRSDKQ) are cytoplasmic.

This sequence belongs to the COX15/CtaA family. Type 1 subfamily. In terms of assembly, interacts with CtaB. It depends on heme b as a cofactor.

Its subcellular location is the cell membrane. It carries out the reaction Fe(II)-heme o + 2 A + H2O = Fe(II)-heme a + 2 AH2. It functions in the pathway porphyrin-containing compound metabolism; heme A biosynthesis; heme A from heme O: step 1/1. Catalyzes the conversion of heme O to heme A by two successive hydroxylations of the methyl group at C8. The first hydroxylation forms heme I, the second hydroxylation results in an unstable dihydroxymethyl group, which spontaneously dehydrates, resulting in the formyl group of heme A. This Staphylococcus aureus (strain bovine RF122 / ET3-1) protein is Heme A synthase.